The chain runs to 153 residues: Arginine repressor (153 aa).

This sequence belongs to the ArgR family.

It localises to the cytoplasm. It participates in amino-acid biosynthesis; L-arginine biosynthesis [regulation]. Functionally, regulates arginine biosynthesis genes. The polypeptide is Arginine repressor (Acetivibrio thermocellus (strain ATCC 27405 / DSM 1237 / JCM 9322 / NBRC 103400 / NCIMB 10682 / NRRL B-4536 / VPI 7372) (Clostridium thermocellum)).